The chain runs to 100 residues: Urease subunit gamma (100 aa).

This sequence belongs to the urease gamma subunit family. Heterotrimer of UreA (gamma), UreB (beta) and UreC (alpha) subunits. Three heterotrimers associate to form the active enzyme.

It localises to the cytoplasm. The enzyme catalyses urea + 2 H2O + H(+) = hydrogencarbonate + 2 NH4(+). It functions in the pathway nitrogen metabolism; urea degradation; CO(2) and NH(3) from urea (urease route): step 1/1. The polypeptide is Urease subunit gamma (Rhizobium etli (strain ATCC 51251 / DSM 11541 / JCM 21823 / NBRC 15573 / CFN 42)).